The primary structure comprises 225 residues: Uridylate kinase (225 aa).

An ATP-binding site is contributed by 9-10 (GS). UMP is bound at residue Gly-43. Gly-44 and Arg-48 together coordinate ATP. UMP is bound by residues Asp-65 and 113–119 (TEPAHST). ATP contacts are provided by Thr-139, Tyr-145, and Asp-148.

Belongs to the UMP kinase family. As to quaternary structure, homohexamer.

It is found in the cytoplasm. It catalyses the reaction UMP + ATP = UDP + ADP. It functions in the pathway pyrimidine metabolism; CTP biosynthesis via de novo pathway; UDP from UMP (UMPK route): step 1/1. Inhibited by UTP. Catalyzes the reversible phosphorylation of UMP to UDP. In Methanobrevibacter smithii (strain ATCC 35061 / DSM 861 / OCM 144 / PS), this protein is Uridylate kinase.